Reading from the N-terminus, the 359-residue chain is GDSL esterase/lipase At2g30310 (359 aa).

The signal sequence occupies residues 1 to 28; sequence MSTSKTIVFGLFVATLLVSCNVAANATT. S41 serves as the catalytic Nucleophile. 2 N-linked (GlcNAc...) asparagine glycosylation sites follow: N103 and N325. Residues D333 and H336 contribute to the active site.

Belongs to the 'GDSL' lipolytic enzyme family.

The protein resides in the secreted. The protein is GDSL esterase/lipase At2g30310 of Arabidopsis thaliana (Mouse-ear cress).